The chain runs to 576 residues: MEVPLQKSAPGSALSPARVLGGIQRPRHLSVFEFESDGFLGSPEPTASSSPVTTLTQTMHNLAGLGSEPPKAQVGSLSFQNRLADLSLSRRTSECSLSSESSESSDAGLCMDSPSPVDPQMAERTFEQAIQAASRVIQNEQFTIKRFRSLPVRLLEHSPVLQSITNSRALDSWRKTEAGYRAAANSPGEDKENDGYIFKMPQELPHSSSAQALAEWVSRRQAFTQRPSSAPDLMCLTTEWKMEVEELSPVAQSSSLTPVERASEEDDGFVDILESDLKDDEKVPAGMENLISAPLVKKLDKEEEQDLIMFSKCQRLFRSPSMPCSVIRPILKRLERPQDRDVPVQSKRRKSVTPLEEQQLEEPKARVFRSKSLCHEIENILDSDHRGLIGDYSKAFLLQTVDGKHQDLKYISPETMVALLTGKFSNIVEKFVIVDCRYPYEYEGGHIKNAVNLPLERDAETFLLQRPIMPCSLDKRIILIFHCEFSSERGPRMCRFIRERDRAANDYPSLYYPEMYILKGGYKEFFPQHPNFCEPQDYRPMNHEAFRDELRNFRLKTRSWAGERSRRELCSRLQDQ.

Position 42 is a phosphoserine (S42). Residues 90–105 show a composition bias toward low complexity; that stretch reads RRTSECSLSSESSESS. Positions 90–119 are disordered; that stretch reads RRTSECSLSSESSESSDAGLCMDSPSPVDP. S167 bears the Phosphoserine; by MELK mark. At S248 the chain carries Phosphoserine. S321 is modified (phosphoserine; by MELK and MAPK14). The segment at 338–358 is disordered; sequence QDRDVPVQSKRRKSVTPLEEQ. Position 351 is a phosphoserine; by AURKA (S351). The residue at position 372 (S372) is a Phosphoserine; by BRSK1 and MAPK14. A Rhodanese domain is found at 427–534; that stretch reads IVEKFVIVDC…FFPQHPNFCE (108 aa). The active site involves C483. S559 bears the Phosphoserine mark.

Belongs to the MPI phosphatase family. As to quaternary structure, interacts with MAPK14 and 14-3-3 proteins. In terms of processing, phosphorylated by BRSK1 in vitro. Phosphorylated by CHEK1, which inhibits the activity of this protein. Phosphorylation at Ser-351 by AURKA might locally participate in the control of the onset of mitosis. Phosphorylation by MELK at Ser-167 promotes localization to the centrosome and the spindle poles during mitosis. Phosphorylation at Ser-321 and Ser-372 by MAPK14 is required for binding to 14-3-3 proteins. In terms of tissue distribution, expressed predominantly in spleen, lung, heart, brain, intestine, and muscle.

The protein resides in the cytoplasm. It localises to the cytoskeleton. The protein localises to the microtubule organizing center. It is found in the centrosome. Its subcellular location is the spindle pole. It carries out the reaction O-phospho-L-tyrosyl-[protein] + H2O = L-tyrosyl-[protein] + phosphate. With respect to regulation, stimulated by B-type cyclins. In terms of biological role, tyrosine protein phosphatase which functions as a dosage-dependent inducer of mitotic progression. Directly dephosphorylates CDK1 and stimulates its kinase activity. Required for G2/M phases of the cell cycle progression and abscission during cytokinesis in a ECT2-dependent manner. The three isoforms seem to have a different level of activity. In Mus musculus (Mouse), this protein is M-phase inducer phosphatase 2 (Cdc25b).